Reading from the N-terminus, the 1098-residue chain is MREAKIAPLSNYGLQWCFEQLGKEEFQTFKALLKEHASESAACSFPLVQVDRADAESLASLLHEHCRASLAWKTSTDIFEKMSLSALSEMARDEMKKYLLAEISEDSAPTKTDQGPSMKEVPGPREDPQDSRDYRIHVMTTFSTRLDTPQRFEEFASECPDAHALSGAFNPDPSGGFRPLTVVLHGPPGVGKSSLARRLLLFWAQGDLYKGLFSYVFLLRARDLQGSRETSFAELISKEWPDAPVPVEKVLSQPERLLIVVDGLEELELTFRDQDSSLLADWAERQPAPVLAHSLLKKVLLPECALLLTVQDAGLQRLQALLRSPRYLWVGGLSVENRMQLLLGGGKHCRRKTCAWHAGADHQEVLDKCQVPVVCALVREALELQGEPGKGLPVPGHTLTGLYATFVFQRLAPKDAGWRALSGEERGALKGLCRLAADGVWNAKFVFDGDDLGVHGLQGPELSALQQASILLPDGHCGRGHAFSHLSLQEFFAALFYVLRGVEGDGEGYPLFPQSTKSLTELRHIDLNVQLVQMKRFLFGLVSKEVMRALETLLGCPVRPVAKQQLLHWICLVGQHPAAAASPDLLEAFYCLFEAQDDEFVRLALNGFQEVWLQLNRPMDLTVSSFCLRRCQHLRKVRLDVRGTPKDEFAEAWSGAPQGLKIKTLDEHWEDLCSVLSTHPNLRQLDLSGSVLSKEAMKTLCVKLRQPACKIQNLIFKGARVTPGLRHLWMTLIINRNITRLDLTGCRLREEDVQTACEALRHPQCALESLRLDRCGLTPASCREISQVLATSGSLKSLSLTGNKVADQGVKSLCDALKVTPCTLQKLILGSCGLTAATCQDLASALIENQGLTHLSLSGDELGSKGMSLLCRAVKLSSCGLQKLALNACSLDVAGCGFLAFALMGNRHLTHLSLSMNPLEDPGMNLLCEVMMEPSCPLRDLDLVNCRLTASCCKSLSNVITRSPRLRSLDLAANALGDEGIAALCEGLKQKNTLTRLGLEACGLTSEGCKALSAALTCSRHLASLNLMRNDLGPRGMTTLCSAFMHPTSNLQTIGLWKEQYPARVRRLLEQVQRLKPHVVISDAWYTEEEEDGPCWRI.

Residues 1-97 (MREAKIAPLS…SEMARDEMKK (97 aa)) enclose the Pyrin domain. The interval 104 to 131 (SEDSAPTKTDQGPSMKEVPGPREDPQDS) is disordered. The span at 122–131 (PGPREDPQDS) shows a compositional bias: basic and acidic residues. Residues 180–503 (LTVVLHGPPG…ALFYVLRGVE (324 aa)) enclose the NACHT domain. 186–193 (GPPGVGKS) contacts ATP. 7 LRR repeats span residues 851-871 (GLTH…SLLC), 880-900 (GLQK…GFLA), 908-928 (HLTH…NLLC), 937-958 (PLRD…SLSN), 965-985 (RLRS…AALC), 993-1013 (TLTR…KALS), and 1021-1041 (HLAS…TTLC).

Belongs to the NLRP family. Component of the subcortical maternal complex (SCMC), at least composed of NLRP5, KHDC3, OOEP, and TLE6. Within the complex, interacts with OOEP, KHDC3 and TLE6. The SCMC may facilitate translocation of its components between the nuclear and cytoplasmic compartments. As part of the SCMC interacts with the SCMC-associated protein ZBED3. As part of the SCMC interacts with the SCMC-associated protein CFL1/Cofilin-1. Interacts with PRKCE. Interacts with TUBB3 at cytoskeleton microtubules. Post-translationally, phosphorylated by PRKCE. As to expression, oocyte-specific.

It localises to the cytoplasm. The protein localises to the cytoplasmic vesicle. Its subcellular location is the secretory vesicle. The protein resides in the cortical granule. It is found in the mitochondrion. It localises to the nucleus. The protein localises to the nucleolus. Its subcellular location is the golgi apparatus. Its function is as follows. Component of the subcortical maternal complex (SCMC), a multiprotein complex that plays a key role in early embryonic development. The SCMC complex is a structural constituent of cytoplasmic lattices, which consist in fibrous structures found in the cytoplasm of oocytes and preimplantation embryos. They are required to store maternal proteins critical for embryonic development, such as proteins that control epigenetic reprogramming of the preimplantation embryo, and prevent their degradation or activation. Required for the localization of cortical granules to the cortex of oocytes, via association with the cortical actin scaffold. Required for cortical actin clearance prior to oocyte exocytosis and prevention of polyspermy. Involved in regulating post-fertilization Ca(2+) release and endoplasmic reticulum storage (ER) storage via regulation of cellular localization. May be involved in the localization of mitochondria to the cytoplasm and perinuclear region in oocytes and early stage embryos, independent of its role in CPL formation. The polypeptide is NACHT, LRR and PYD domains-containing protein 5 (NLRP5) (Bos taurus (Bovine)).